A 455-amino-acid polypeptide reads, in one-letter code: Bifunctional protein GlmU (455 aa).

A pyrophosphorylase region spans residues 1–232; the sequence is MASTTGALIL…DPNLLGVNNP (232 aa). Residues 10–13, Lys24, Gln75, and 80–81 each bind UDP-N-acetyl-alpha-D-glucosamine; these read LAAG and GT. Mg(2+) is bound at residue Asp106. Residues Gly141, Glu155, Asn172, and Asn230 each contribute to the UDP-N-acetyl-alpha-D-glucosamine site. Asn230 is a binding site for Mg(2+). Residues 233–253 form a linker region; it reads AELIRSEALLRTRLVIGHIEG. The N-acetyltransferase stretch occupies residues 254-455; that stretch reads GVLIHAPETV…QTNLPRKPKA (202 aa). UDP-N-acetyl-alpha-D-glucosamine is bound by residues Arg336 and Lys354. His366 functions as the Proton acceptor in the catalytic mechanism. Tyr369 and Asn380 together coordinate UDP-N-acetyl-alpha-D-glucosamine. Acetyl-CoA-binding positions include Ala383, 389–390, Ser408, Ala426, and Arg443; that span reads NY.

In the N-terminal section; belongs to the N-acetylglucosamine-1-phosphate uridyltransferase family. The protein in the C-terminal section; belongs to the transferase hexapeptide repeat family. As to quaternary structure, homotrimer. The cofactor is Mg(2+).

It localises to the cytoplasm. It catalyses the reaction alpha-D-glucosamine 1-phosphate + acetyl-CoA = N-acetyl-alpha-D-glucosamine 1-phosphate + CoA + H(+). The catalysed reaction is N-acetyl-alpha-D-glucosamine 1-phosphate + UTP + H(+) = UDP-N-acetyl-alpha-D-glucosamine + diphosphate. The protein operates within nucleotide-sugar biosynthesis; UDP-N-acetyl-alpha-D-glucosamine biosynthesis; N-acetyl-alpha-D-glucosamine 1-phosphate from alpha-D-glucosamine 6-phosphate (route II): step 2/2. It functions in the pathway nucleotide-sugar biosynthesis; UDP-N-acetyl-alpha-D-glucosamine biosynthesis; UDP-N-acetyl-alpha-D-glucosamine from N-acetyl-alpha-D-glucosamine 1-phosphate: step 1/1. It participates in bacterial outer membrane biogenesis; LPS lipid A biosynthesis. Catalyzes the last two sequential reactions in the de novo biosynthetic pathway for UDP-N-acetylglucosamine (UDP-GlcNAc). The C-terminal domain catalyzes the transfer of acetyl group from acetyl coenzyme A to glucosamine-1-phosphate (GlcN-1-P) to produce N-acetylglucosamine-1-phosphate (GlcNAc-1-P), which is converted into UDP-GlcNAc by the transfer of uridine 5-monophosphate (from uridine 5-triphosphate), a reaction catalyzed by the N-terminal domain. The protein is Bifunctional protein GlmU of Nitratidesulfovibrio vulgaris (strain ATCC 29579 / DSM 644 / CCUG 34227 / NCIMB 8303 / VKM B-1760 / Hildenborough) (Desulfovibrio vulgaris).